The primary structure comprises 570 residues: Proline--tRNA ligase (570 aa).

It belongs to the class-II aminoacyl-tRNA synthetase family. ProS type 1 subfamily. In terms of assembly, homodimer.

It localises to the cytoplasm. It catalyses the reaction tRNA(Pro) + L-proline + ATP = L-prolyl-tRNA(Pro) + AMP + diphosphate. Functionally, catalyzes the attachment of proline to tRNA(Pro) in a two-step reaction: proline is first activated by ATP to form Pro-AMP and then transferred to the acceptor end of tRNA(Pro). As ProRS can inadvertently accommodate and process non-cognate amino acids such as alanine and cysteine, to avoid such errors it has two additional distinct editing activities against alanine. One activity is designated as 'pretransfer' editing and involves the tRNA(Pro)-independent hydrolysis of activated Ala-AMP. The other activity is designated 'posttransfer' editing and involves deacylation of mischarged Ala-tRNA(Pro). The misacylated Cys-tRNA(Pro) is not edited by ProRS. The protein is Proline--tRNA ligase of Shewanella sp. (strain ANA-3).